The following is a 228-amino-acid chain: L-ribulose-5-phosphate 4-epimerase UlaF (228 aa).

Substrate is bound by residues 26-27 (GN), 43-44 (SG), and 72-73 (SS). D74, H93, and H95 together coordinate Zn(2+). D118 serves as the catalytic Proton donor/acceptor. Residue H167 participates in Zn(2+) binding. The active-site Proton donor/acceptor is Y225.

The protein belongs to the aldolase class II family. AraD/FucA subfamily. Requires Zn(2+) as cofactor.

It carries out the reaction L-ribulose 5-phosphate = D-xylulose 5-phosphate. The protein operates within cofactor degradation; L-ascorbate degradation; D-xylulose 5-phosphate from L-ascorbate: step 4/4. Its function is as follows. Catalyzes the isomerization of L-ribulose 5-phosphate to D-xylulose 5-phosphate. Is involved in the anaerobic L-ascorbate utilization. This is L-ribulose-5-phosphate 4-epimerase UlaF from Escherichia coli (strain SMS-3-5 / SECEC).